We begin with the raw amino-acid sequence, 263 residues long: MFDIGLNITSSQFDHDRDEMIARARAAGVDSMLFTGTSLEESDRACAFARRYAGCWSTAGVHPHDASTWNDESAARLRALASEPEVVAIGECGLDFNRNFSTPAEQEHAFTEQLRLAAALALPVFLHCRDAHARFLALLDPWLDKLPGAVLHCFTGTEQEARECLARGMYLGITGWVCDERRGLELRALLPIIPADRLLLETDAPYLLPRDLTPKPASRRNEPCWLPHILTQVAQWRGEDPAWLEAATDANAARLFLKNASPA.

3 residues coordinate a divalent metal cation: Glu-91, His-127, and His-152.

Belongs to the metallo-dependent hydrolases superfamily. TatD-type hydrolase family. TatD subfamily. In terms of assembly, monomer. Mg(2+) is required as a cofactor.

The protein resides in the cytoplasm. 3'-5' exonuclease that prefers single-stranded DNA and RNA. May play a role in the H(2)O(2)-induced DNA damage repair. The sequence is that of 3'-5' ssDNA/RNA exonuclease TatD from Cronobacter turicensis (strain DSM 18703 / CCUG 55852 / LMG 23827 / z3032).